A 220-amino-acid chain; its full sequence is NADH-quinone oxidoreductase subunit I (220 aa).

4Fe-4S ferredoxin-type domains are found at residues 71-102 (LQRL…IITH) and 112-141 (DSYT…MGNR). [4Fe-4S] cluster is bound by residues Cys82, Cys85, Cys88, Cys92, Cys121, Cys124, Cys127, and Cys131. The interval 187–220 (MQATPLDYVQEPSKEESKEESPTSPESHKGDENV) is disordered. Over residues 198-220 (PSKEESKEESPTSPESHKGDENV) the composition is skewed to basic and acidic residues.

The protein belongs to the complex I 23 kDa subunit family. NDH-1 is composed of 14 different subunits. Subunits NuoA, H, J, K, L, M, N constitute the membrane sector of the complex. Requires [4Fe-4S] cluster as cofactor.

The protein resides in the cell inner membrane. The enzyme catalyses a quinone + NADH + 5 H(+)(in) = a quinol + NAD(+) + 4 H(+)(out). Its function is as follows. NDH-1 shuttles electrons from NADH, via FMN and iron-sulfur (Fe-S) centers, to quinones in the respiratory chain. The immediate electron acceptor for the enzyme in this species is believed to be ubiquinone. Couples the redox reaction to proton translocation (for every two electrons transferred, four hydrogen ions are translocated across the cytoplasmic membrane), and thus conserves the redox energy in a proton gradient. In Helicobacter pylori (strain J99 / ATCC 700824) (Campylobacter pylori J99), this protein is NADH-quinone oxidoreductase subunit I.